Here is a 370-residue protein sequence, read N- to C-terminus: Glutamine synthetase (370 aa).

Position 2 is an N-acetylalanine (Ala-2). Ser-5 is subject to Phosphoserine. The GS beta-grasp domain maps to 24 to 103 (IIAEYVWIDG…VLAACYNNDG (80 aa)). The GS catalytic domain occupies 110–370 (HRHEAAKLFA…MTKEFERESS (261 aa)). Glycyl lysine isopeptide (Lys-Gly) (interchain with G-Cter in ubiquitin) cross-links involve residues Lys-283, Lys-324, and Lys-363.

The protein belongs to the glutamine synthetase family. As to quaternary structure, homooctamer.

It localises to the cytoplasm. It carries out the reaction L-glutamate + NH4(+) + ATP = L-glutamine + ADP + phosphate + H(+). In Saccharomyces cerevisiae (strain ATCC 204508 / S288c) (Baker's yeast), this protein is Glutamine synthetase (GLN1).